The chain runs to 119 residues: 5-hydroxyisourate hydrolase (119 aa).

The substrate site is built by histidine 10, arginine 48, and tyrosine 116.

The protein belongs to the transthyretin family. 5-hydroxyisourate hydrolase subfamily. Homotetramer.

It catalyses the reaction 5-hydroxyisourate + H2O = 5-hydroxy-2-oxo-4-ureido-2,5-dihydro-1H-imidazole-5-carboxylate + H(+). It participates in purine metabolism; urate degradation; (S)-allantoin from urate: step 2/3. Functionally, catalyzes the hydrolysis of 5-hydroxyisourate (HIU) to 2-oxo-4-hydroxy-4-carboxy-5-ureidoimidazoline (OHCU). This is 5-hydroxyisourate hydrolase from Deinococcus radiodurans (strain ATCC 13939 / DSM 20539 / JCM 16871 / CCUG 27074 / LMG 4051 / NBRC 15346 / NCIMB 9279 / VKM B-1422 / R1).